A 225-amino-acid polypeptide reads, in one-letter code: Cytochrome c oxidase subunit 2 (225 aa).

Topologically, residues 1–25 (MSTWFMFMFQESNSYYADNLISFHN) are mitochondrial intermembrane. The helical transmembrane segment at 26 to 47 (MVMMIIIMISTLTVYIILDLFM) threads the bilayer. Residues 48–62 (NKFSNLFLLKNHNIE) are Mitochondrial matrix-facing. Residues 63-82 (IIWTIIPIIILLIICFPSLK) traverse the membrane as a helical segment. The Mitochondrial intermembrane portion of the chain corresponds to 83–225 (ILYLIDEIVN…YFLNWVNKQI (143 aa)). Positions 159, 194, 196, 198, 202, and 205 each coordinate Cu cation. Glutamate 196 serves as a coordination point for Mg(2+).

It belongs to the cytochrome c oxidase subunit 2 family. As to quaternary structure, component of the cytochrome c oxidase (complex IV, CIV), a multisubunit enzyme composed of a catalytic core of 3 subunits and several supernumerary subunits. The complex exists as a monomer or a dimer and forms supercomplexes (SCs) in the inner mitochondrial membrane with ubiquinol-cytochrome c oxidoreductase (cytochrome b-c1 complex, complex III, CIII). It depends on Cu cation as a cofactor.

Its subcellular location is the mitochondrion inner membrane. The catalysed reaction is 4 Fe(II)-[cytochrome c] + O2 + 8 H(+)(in) = 4 Fe(III)-[cytochrome c] + 2 H2O + 4 H(+)(out). In terms of biological role, component of the cytochrome c oxidase, the last enzyme in the mitochondrial electron transport chain which drives oxidative phosphorylation. The respiratory chain contains 3 multisubunit complexes succinate dehydrogenase (complex II, CII), ubiquinol-cytochrome c oxidoreductase (cytochrome b-c1 complex, complex III, CIII) and cytochrome c oxidase (complex IV, CIV), that cooperate to transfer electrons derived from NADH and succinate to molecular oxygen, creating an electrochemical gradient over the inner membrane that drives transmembrane transport and the ATP synthase. Cytochrome c oxidase is the component of the respiratory chain that catalyzes the reduction of oxygen to water. Electrons originating from reduced cytochrome c in the intermembrane space (IMS) are transferred via the dinuclear copper A center (CU(A)) of subunit 2 and heme A of subunit 1 to the active site in subunit 1, a binuclear center (BNC) formed by heme A3 and copper B (CU(B)). The BNC reduces molecular oxygen to 2 water molecules using 4 electrons from cytochrome c in the IMS and 4 protons from the mitochondrial matrix. This chain is Cytochrome c oxidase subunit 2 (COII), found in Apis mellifera ligustica (Common honeybee).